Here is a 400-residue protein sequence, read N- to C-terminus: Subtilisin-like protease 7 (400 aa).

The signal sequence occupies residues 1 to 20 (MGFITKAIPLALAAASVING). Residues 21–119 (AEILETRAGV…IERDARVQIN (99 aa)) constitute a propeptide that is removed on maturation. The region spanning 36–118 (KYIVVMNDGM…YIERDARVQI (83 aa)) is the Inhibitor I9 domain. The Peptidase S8 domain occupies 129–400 (SWGLARVGSK…GKLINNGSGK (272 aa)). Active-site charge relay system residues include Asp161 and His192. Asn252 is a glycosylation site (N-linked (GlcNAc...) asparagine). The Charge relay system role is filled by Ser346. A glycan (N-linked (GlcNAc...) asparagine) is linked at Asn396.

The protein belongs to the peptidase S8 family.

The protein resides in the secreted. Functionally, secreted subtilisin-like serine protease with keratinolytic activity that contributes to pathogenicity. This chain is Subtilisin-like protease 7 (SUB7), found in Arthroderma gypseum (strain ATCC MYA-4604 / CBS 118893) (Microsporum gypseum).